Here is a 348-residue protein sequence, read N- to C-terminus: MEQPVIPVRNIYYMLTYAWGYLQEIKQANLEAIPGNNLLDILGYVLNKGVLQLSRRGLELDYNPNTEIIPGIKGRIEFAKTIRGFHLNHGKTVSTFDMLNEDTLANRIIKSTLAILIKHEKLNSTIRDEARSLYRKLPGISTLHLTPQHFSYLNGGKNTRYYKFVISVCKFIVNNSIPGQNKGHYRFYDFERNEKEMSLLYQKFLYEFCRRELTSANTTRSYLKWDASSISDQSLNLLPRMETDITIRSSEKILIVDAKYYKSIFSRRMGTEKFHSQNLYQLMNYLWSLKPENGENIGGLLIYPHVDTAVKHRYKINGFDIGLCTVNLGQEWPCIHQELLDIFDEYLK.

In terms of biological role, modifies the specificity of McrB restriction by expanding the range of modified sequences restricted. Does not bind to DNA. The protein is Type IV methyl-directed restriction enzyme EcoKMcrBC (mcrC) of Escherichia coli (strain K12).